The sequence spans 218 residues: 5-oxoprolinase subunit B (218 aa).

The protein belongs to the PxpB family. Forms a complex composed of PxpA, PxpB and PxpC.

The enzyme catalyses 5-oxo-L-proline + ATP + 2 H2O = L-glutamate + ADP + phosphate + H(+). Its function is as follows. Catalyzes the cleavage of 5-oxoproline to form L-glutamate coupled to the hydrolysis of ATP to ADP and inorganic phosphate. The chain is 5-oxoprolinase subunit B from Escherichia coli O157:H7.